A 280-amino-acid polypeptide reads, in one-letter code: Meiotic driver wtf35 (280 aa).

The span at 1–29 (MKNKDYPLRTSMDELSTKNDNEIDLEKGP) shows a compositional bias: basic and acidic residues. Disordered regions lie at residues 1-49 (MKNK…DLNN) and 64-100 (NKSTTPPDYDENRLPITDEGNNPPNTHRENHSSGTTD). 4 helical membrane passes run 105-125 (FLIKLLISFTSIILFNAPAVC), 142-162 (WTLIGFWCASSLIIFTFSWYF), 184-204 (IPMAFSEVFLFNILVGSPRVA), and 218-238 (SLADHIIFAILSILVFIVETV).

Belongs to the WTF family. Homomer. Forms protein aggregates. The two isoforms can interact with each other and with themselves. High sequence similarity is required for their interaction.

The protein localises to the spore membrane. Its subcellular location is the vacuole membrane. The protein resides in the ascus epiplasm. It is found in the cytoplasm. It localises to the endoplasmic reticulum membrane. In terms of biological role, promotes unequal transmission of alleles from the parental zygote to progeny spores by acting as poison/antidote system where the poison and antidote proteins are produced from the same locus; the poison component is trans-acting and targets all spores within an ascus whereas the antidote component is spore-specific, leading to poisoning of all progeny that do not inherit the allele. Localizes isoform 2 to the vacuole thereby facilitating its degradation. Its function is as follows. Forms toxic aggregates that disrupt spore maturation. This is Meiotic driver wtf35 from Schizosaccharomyces pombe (Fission yeast).